Reading from the N-terminus, the 255-residue chain is Glutamate racemase (255 aa).

Residues 7–8 (DS) and 39–40 (YG) contribute to the substrate site. The active-site Proton donor/acceptor is the C70. Residue 71-72 (NT) coordinates substrate. C181 serves as the catalytic Proton donor/acceptor. 182–183 (TH) lines the substrate pocket.

Belongs to the aspartate/glutamate racemases family.

The catalysed reaction is L-glutamate = D-glutamate. It functions in the pathway cell wall biogenesis; peptidoglycan biosynthesis. Provides the (R)-glutamate required for cell wall biosynthesis. In Helicobacter pylori (strain HPAG1), this protein is Glutamate racemase.